Consider the following 115-residue polypeptide: Large ribosomal subunit protein bL20 (115 aa).

The protein belongs to the bacterial ribosomal protein bL20 family.

Binds directly to 23S ribosomal RNA and is necessary for the in vitro assembly process of the 50S ribosomal subunit. It is not involved in the protein synthesizing functions of that subunit. The chain is Large ribosomal subunit protein bL20 from Synechococcus sp. (strain CC9311).